Here is a 730-residue protein sequence, read N- to C-terminus: Elongation factor 2 (730 aa).

The tr-type G domain occupies 19-260; it reads QRIRNIGIVA…MVIHFLPNPL (242 aa). GTP-binding positions include 28 to 35, 94 to 98, and 148 to 151; these read AHIDHGKT, DTPGH, and NKVD. H596 carries the post-translational modification Diphthamide.

It belongs to the TRAFAC class translation factor GTPase superfamily. Classic translation factor GTPase family. EF-G/EF-2 subfamily.

The protein resides in the cytoplasm. Its function is as follows. Catalyzes the GTP-dependent ribosomal translocation step during translation elongation. During this step, the ribosome changes from the pre-translocational (PRE) to the post-translocational (POST) state as the newly formed A-site-bound peptidyl-tRNA and P-site-bound deacylated tRNA move to the P and E sites, respectively. Catalyzes the coordinated movement of the two tRNA molecules, the mRNA and conformational changes in the ribosome. The chain is Elongation factor 2 from Methanosarcina mazei (strain ATCC BAA-159 / DSM 3647 / Goe1 / Go1 / JCM 11833 / OCM 88) (Methanosarcina frisia).